Reading from the N-terminus, the 132-residue chain is Small ribosomal subunit protein uS8 (132 aa).

This sequence belongs to the universal ribosomal protein uS8 family. Part of the 30S ribosomal subunit. Contacts proteins S5 and S12.

Its function is as follows. One of the primary rRNA binding proteins, it binds directly to 16S rRNA central domain where it helps coordinate assembly of the platform of the 30S subunit. In Nitrobacter winogradskyi (strain ATCC 25391 / DSM 10237 / CIP 104748 / NCIMB 11846 / Nb-255), this protein is Small ribosomal subunit protein uS8.